Consider the following 500-residue polypeptide: Lysine--tRNA ligase (500 aa).

Positions 411 and 418 each coordinate Mg(2+).

It belongs to the class-II aminoacyl-tRNA synthetase family. Homodimer. It depends on Mg(2+) as a cofactor.

It is found in the cytoplasm. It carries out the reaction tRNA(Lys) + L-lysine + ATP = L-lysyl-tRNA(Lys) + AMP + diphosphate. This is Lysine--tRNA ligase from Actinobacillus pleuropneumoniae serotype 7 (strain AP76).